Here is a 211-residue protein sequence, read N- to C-terminus: uncharacterized protein (211 aa).

2 stretches are compositionally biased toward low complexity: residues 1–19 (MQDP…SSSD) and 61–74 (SPSV…SSNA). Disordered stretches follow at residues 1–27 (MQDP…STGS) and 54–94 (ASSR…EPHR).

In terms of assembly, interacts with RLK902. Expressed in inflorescences, stems, rosette leaves and weakly in roots.

This is an uncharacterized protein from Arabidopsis thaliana (Mouse-ear cress).